A 686-amino-acid polypeptide reads, in one-letter code: Band 4.1-like protein 4A (686 aa).

An FERM domain is found at 11–299 (FYCEVLLLDE…EHHTFFRMPD (289 aa)). At Ser304 the chain carries Phosphoserine. Composition is skewed to polar residues over residues 332-346 (DLSI…NVVR) and 357-382 (AQTQ…NEGT). Residues 332-669 (DLSIQLPRPN…LSTINPAGKP (338 aa)) form a disordered region. Ser389, Ser393, and Ser402 each carry phosphoserine. Polar residues-rich tracts occupy residues 418–428 (GPQSGLYNSSS) and 442–455 (RNLS…SSQL). The span at 479 to 489 (RCNTSSGSESE) shows a compositional bias: low complexity. 2 stretches are compositionally biased toward basic and acidic residues: residues 518–527 (VLRRQKEKNQ) and 547–561 (QAKE…KELV). A compositionally biased stretch (basic residues) spans 588 to 601 (IRHSHSPRSYRQYR). The span at 648-658 (GSKDSLIEEKS) shows a compositional bias: basic and acidic residues.

In terms of tissue distribution, brain, heart, lung, liver and spleen. Not detected in thymus and kidney.

The protein resides in the cytoplasm. It localises to the cytoskeleton. The chain is Band 4.1-like protein 4A from Mus musculus (Mouse).